The primary structure comprises 536 residues: Chromosomal replication initiator protein DnaA (536 aa).

Residues 1–72 (MNDFWQHCSA…DLARDFWNAP (72 aa)) form a domain I, interacts with DnaA modulators region. The interval 72 to 199 (PIEVQFVLDP…EAADSMYERS (128 aa)) is domain II. A disordered region spans residues 97–121 (RAPLPAANPAPVTAGPAPSGAADAN). Residues 105 to 121 (PAPVTAGPAPSGAADAN) show a composition bias toward low complexity. The interval 200-416 (KLNPVLTFDN…GALRKILAYS (217 aa)) is domain III, AAA+ region. ATP is bound by residues Gly244, Gly246, Lys247, and Thr248. Residues 417–536 (KFHGREITIE…LHVLEQTLKG (120 aa)) form a domain IV, binds dsDNA region.

It belongs to the DnaA family. As to quaternary structure, oligomerizes as a right-handed, spiral filament on DNA at oriC.

It localises to the cytoplasm. Plays an essential role in the initiation and regulation of chromosomal replication. ATP-DnaA binds to the origin of replication (oriC) to initiate formation of the DNA replication initiation complex once per cell cycle. Binds the DnaA box (a 9 base pair repeat at the origin) and separates the double-stranded (ds)DNA. Forms a right-handed helical filament on oriC DNA; dsDNA binds to the exterior of the filament while single-stranded (ss)DNA is stabiized in the filament's interior. The ATP-DnaA-oriC complex binds and stabilizes one strand of the AT-rich DNA unwinding element (DUE), permitting loading of DNA polymerase. After initiation quickly degrades to an ADP-DnaA complex that is not apt for DNA replication. Binds acidic phospholipids. This is Chromosomal replication initiator protein DnaA from Burkholderia thailandensis (strain ATCC 700388 / DSM 13276 / CCUG 48851 / CIP 106301 / E264).